Reading from the N-terminus, the 309-residue chain is Porphobilinogen deaminase (309 aa).

Cys243 carries the S-(dipyrrolylmethanemethyl)cysteine modification.

It belongs to the HMBS family. As to quaternary structure, monomer. Dipyrromethane serves as cofactor.

The enzyme catalyses 4 porphobilinogen + H2O = hydroxymethylbilane + 4 NH4(+). It functions in the pathway porphyrin-containing compound metabolism; protoporphyrin-IX biosynthesis; coproporphyrinogen-III from 5-aminolevulinate: step 2/4. Its function is as follows. Tetrapolymerization of the monopyrrole PBG into the hydroxymethylbilane pre-uroporphyrinogen in several discrete steps. This Deinococcus geothermalis (strain DSM 11300 / CIP 105573 / AG-3a) protein is Porphobilinogen deaminase.